Consider the following 273-residue polypeptide: Urease accessory protein UreD (273 aa).

It belongs to the UreD family. In terms of assembly, ureD, UreF and UreG form a complex that acts as a GTP-hydrolysis-dependent molecular chaperone, activating the urease apoprotein by helping to assemble the nickel containing metallocenter of UreC. The UreE protein probably delivers the nickel.

The protein resides in the cytoplasm. Required for maturation of urease via the functional incorporation of the urease nickel metallocenter. The sequence is that of Urease accessory protein UreD from Rhizobium etli (strain ATCC 51251 / DSM 11541 / JCM 21823 / NBRC 15573 / CFN 42).